Reading from the N-terminus, the 251-residue chain is tRNA (guanine-N(1)-)-methyltransferase (251 aa).

S-adenosyl-L-methionine contacts are provided by residues G117 and 137–142 (IGDYVL).

The protein belongs to the RNA methyltransferase TrmD family. In terms of assembly, homodimer.

Its subcellular location is the cytoplasm. The enzyme catalyses guanosine(37) in tRNA + S-adenosyl-L-methionine = N(1)-methylguanosine(37) in tRNA + S-adenosyl-L-homocysteine + H(+). Its function is as follows. Specifically methylates guanosine-37 in various tRNAs. This Haemophilus ducreyi (strain 35000HP / ATCC 700724) protein is tRNA (guanine-N(1)-)-methyltransferase.